We begin with the raw amino-acid sequence, 353 residues long: F-box protein At3g58530 (353 aa).

Positions 8–56 (EEEEETWRREIVTSVMRLVSTRLPQTDLISLLLVSPWLYRTLISYPSIW) constitute an F-box; degenerate domain.

The protein is F-box protein At3g58530 of Arabidopsis thaliana (Mouse-ear cress).